Here is a 241-residue protein sequence, read N- to C-terminus: Hydantoin racemase (241 aa).

The protein belongs to the HyuE racemase family. In terms of assembly, homotetramer.

The catalysed reaction is a D-5-monosubstituted hydantoin = a L-5-monosubstituted hydantoin. It carries out the reaction D-5-benzylhydantoin = L-5-benzylhydantoin. It catalyses the reaction D-5-isobutylhydantoin = L-5-isobutylhydantoin. Its activity is regulated as follows. Inhibited by Cu(2+), Hg(2+), Pb(2+) and Zn(2+). The activity is twofold lower in the presence of Mn(2+), Co(2+) and Ni(2+). The insignificant effect of the metal chelating agent EDTA on the hydantoin racemase activity would indicate that it is not a metalloenzyme. May be involved in the asymmetric conversion of racemic 5-substituted hydantoins to the corresponding L-amino acids. Catalyzes the racemization via enolization of D- and L-5-monosubstituted hydantoins. This Rhizobium meliloti (Ensifer meliloti) protein is Hydantoin racemase.